Reading from the N-terminus, the 135-residue chain is Putative hydrolase EbsB (135 aa).

Residues 1-128 form the RNase H type-1 domain; it reads MLRIYVDAAT…ADMLARQALQ (128 aa). Mg(2+) is bound by residues Asp-7, Glu-45, Asp-71, and Asp-120.

This sequence belongs to the RNase H family. EbsB subfamily. Requires Mg(2+) as cofactor.

It is found in the secreted. The protein localises to the cell wall. Seems to play some role in the cell surface expression of a chromosomally encoded receptor, named enterococcal binding substance (EBS), that mediates mating aggregate formation. Might interfere with the synthesis or assembly of EBS and function as a cell wall hydrolase. The protein is Putative hydrolase EbsB of Enterococcus faecalis (strain ATCC 700802 / V583).